The chain runs to 127 residues: Large ribosomal subunit protein bL12 (127 aa).

Positions 96–127 (GTPSTLKEAVSKDDAEEAAKQLKEAGAEVEVK) are disordered. The segment covering 104–127 (AVSKDDAEEAAKQLKEAGAEVEVK) has biased composition (basic and acidic residues).

It belongs to the bacterial ribosomal protein bL12 family. Homodimer. Part of the ribosomal stalk of the 50S ribosomal subunit. Forms a multimeric L10(L12)X complex, where L10 forms an elongated spine to which 2 to 4 L12 dimers bind in a sequential fashion. Binds GTP-bound translation factors.

Its function is as follows. Forms part of the ribosomal stalk which helps the ribosome interact with GTP-bound translation factors. Is thus essential for accurate translation. This Oleidesulfovibrio alaskensis (strain ATCC BAA-1058 / DSM 17464 / G20) (Desulfovibrio alaskensis) protein is Large ribosomal subunit protein bL12.